The chain runs to 407 residues: Substance-P receptor (407 aa).

The Extracellular segment spans residues 1-31 (MDNVLQVDSDLFPNISTNTSEPNQFVQPAWQ). N-linked (GlcNAc...) asparagine glycosylation is found at N14 and N18. The helical transmembrane segment at 32 to 54 (IVLWAAAYTVIVVTSVVGNVVVM) threads the bilayer. Over 55–64 (WIILAHKRMR) the chain is Cytoplasmic. A helical membrane pass occupies residues 65 to 86 (TVTNYFLVNLAFAEASMAAFNT). Residues 87 to 106 (VVNFTYAVHNEWYYGLFYCK) lie on the Extracellular side of the membrane. C105 and C180 form a disulfide bridge. The chain crosses the membrane as a helical span at residues 107–128 (FHNFFPIAAVFASIYSMTAVAF). The Cytoplasmic portion of the chain corresponds to 129–148 (DRYMAIIHPLQPRLSATATK). Residues 149-169 (VVICVIWVLALLLAFPQGYYS) traverse the membrane as a helical segment. The Extracellular portion of the chain corresponds to 170-194 (TTETMPNRVVCMIEWPEHPNKIYEK). Residues 195-219 (VYHICVTVLIYFLPLLVIGYAYTVV) form a helical membrane-spanning segment. The Cytoplasmic portion of the chain corresponds to 220-248 (GITLWASEIPGDSSDRYHEQVSAKRKVVK). The chain crosses the membrane as a helical span at residues 249–270 (MMIVVVCTFAICWLPFHIFFLL). Over 271 to 283 (PYINPDLYLEKFI) the chain is Extracellular. A helical membrane pass occupies residues 284–308 (QQVYLAIMWLAMSSTMYNPIIYCCL). Topologically, residues 309–407 (NDRFRLGFKH…SFSFYSNMLS (99 aa)) are cytoplasmic. Residue C322 is the site of S-palmitoyl cysteine attachment. A disordered region spans residues 365-394 (HEEELEDGPKTTPSSLDLTSNGSSRSDSKT). Over residues 375-394 (TTPSSLDLTSNGSSRSDSKT) the composition is skewed to polar residues.

It belongs to the G-protein coupled receptor 1 family. In terms of assembly, interacts with ARRB1.

The protein resides in the cell membrane. Its function is as follows. This is a receptor for the tachykinin neuropeptide substance P. It is probably associated with G proteins that activate a phosphatidylinositol-calcium second messenger system. The polypeptide is Substance-P receptor (TACR1) (Canis lupus familiaris (Dog)).